The following is a 330-amino-acid chain: D-lactate dehydrogenase (330 aa).

NAD(+) contacts are provided by residues 156–157, Asp176, 206–207, 233–235, and Asp259; these read RI, VP, and AAR. Residue Arg235 is part of the active site. Glu264 is a catalytic residue. Catalysis depends on His296, which acts as the Proton donor.

Belongs to the D-isomer specific 2-hydroxyacid dehydrogenase family.

The catalysed reaction is (R)-lactate + NAD(+) = pyruvate + NADH + H(+). In Staphylococcus aureus (strain MSSA476), this protein is D-lactate dehydrogenase (ldhD).